The primary structure comprises 31 residues: Photosystem II reaction center protein T (31 aa).

The chain crosses the membrane as a helical span at residues 3 to 23 (ALVYVFLLVGTLMVIFFAIFF).

It belongs to the PsbT family. In terms of assembly, PSII is composed of 1 copy each of membrane proteins PsbA, PsbB, PsbC, PsbD, PsbE, PsbF, PsbH, PsbI, PsbJ, PsbK, PsbL, PsbM, PsbT, PsbX, PsbY, PsbZ, Psb30/Ycf12, at least 3 peripheral proteins of the oxygen-evolving complex and a large number of cofactors. It forms dimeric complexes.

The protein resides in the plastid. The protein localises to the chloroplast thylakoid membrane. Functionally, found at the monomer-monomer interface of the photosystem II (PS II) dimer, plays a role in assembly and dimerization of PSII. PSII is a light-driven water plastoquinone oxidoreductase, using light energy to abstract electrons from H(2)O, generating a proton gradient subsequently used for ATP formation. This is Photosystem II reaction center protein T from Gracilaria tenuistipitata var. liui (Red alga).